Reading from the N-terminus, the 434-residue chain is D-amino acid dehydrogenase (434 aa).

3–17 (VIVLGSGVIGTTTAY) contacts FAD.

This sequence belongs to the DadA oxidoreductase family. Requires FAD as cofactor.

The catalysed reaction is a D-alpha-amino acid + A + H2O = a 2-oxocarboxylate + AH2 + NH4(+). Its function is as follows. Oxidative deamination of D-amino acids. This Bordetella parapertussis (strain 12822 / ATCC BAA-587 / NCTC 13253) protein is D-amino acid dehydrogenase.